A 328-amino-acid chain; its full sequence is MAFRLAVDCLGFENHPREAIDAVLEYWSYHQELEFILVGDEKTFDGLDYLPKNITKQLASSCIDMTDTPLTARRKVNNSMQKAINLVRDGAADVVISAGSSAVYASLTYDGFGKIHKDVKSAFMSYVPTANNDWFYFLDVGANKNFTGKELYFLGLMADIFVKKTTNKISPRIALLNIGTEIHKGFDYHQEGYQLLNEDKHLNFTGFIEPRFLLDGVCDILVADGYSGNLVLKSMEGTFKTIARLLKQGYKRNPLAGLFSLGILKRIAKRFDYKNNAGAVVIGLNKLALKTHGSADKQQFLSTIRLAHTSLKSDLINAIKSSLDNYEK.

The protein belongs to the PlsX family. Homodimer. Probably interacts with PlsY.

It localises to the cytoplasm. The catalysed reaction is a fatty acyl-[ACP] + phosphate = an acyl phosphate + holo-[ACP]. Its pathway is lipid metabolism; phospholipid metabolism. Its function is as follows. Catalyzes the reversible formation of acyl-phosphate (acyl-PO(4)) from acyl-[acyl-carrier-protein] (acyl-ACP). This enzyme utilizes acyl-ACP as fatty acyl donor, but not acyl-CoA. This chain is Phosphate acyltransferase, found in Mycoplasma pneumoniae (strain ATCC 29342 / M129 / Subtype 1) (Mycoplasmoides pneumoniae).